The sequence spans 422 residues: Elongation factor 1-alpha (422 aa).

The 217-residue stretch at 5–221 (KPHMNLAVIG…NNLKVPEKPS (217 aa)) folds into the tr-type G domain. The interval 14 to 21 (GHIDHGKS) is G1. A GTP-binding site is contributed by 14-21 (GHIDHGKS). Ser21 lines the Mg(2+) pocket. Residues 70–74 (GITID) are G2. Positions 91-94 (DCPG) are G3. Residues 91–95 (DCPGH) and 146–149 (NKMD) each bind GTP. A G4 region spans residues 146 to 149 (NKMD). The G5 stretch occupies residues 185–187 (SAF).

It belongs to the TRAFAC class translation factor GTPase superfamily. Classic translation factor GTPase family. EF-Tu/EF-1A subfamily.

It is found in the cytoplasm. It catalyses the reaction GTP + H2O = GDP + phosphate + H(+). In terms of biological role, GTP hydrolase that promotes the GTP-dependent binding of aminoacyl-tRNA to the A-site of ribosomes during protein biosynthesis. The polypeptide is Elongation factor 1-alpha (Methanosarcina barkeri (strain Fusaro / DSM 804)).